A 306-amino-acid polypeptide reads, in one-letter code: Isoaspartyl peptidase/L-asparaginase (306 aa).

Threonine 174 functions as the Nucleophile in the catalytic mechanism. Residues arginine 202–aspartate 205 and threonine 224–glycine 227 contribute to the substrate site.

The protein belongs to the Ntn-hydrolase family. Heterotetramer of two alpha and two beta chains arranged as a dimer of alpha/beta heterodimers. Cleaved into an alpha and beta chain by autocatalysis; this activates the enzyme. The N-terminal residue of the beta subunit is responsible for the nucleophile hydrolase activity. Developing seeds.

The catalysed reaction is Cleavage of a beta-linked Asp residue from the N-terminus of a polypeptide.. In terms of biological role, degrades proteins damaged by L-isoaspartyl residue formation (also known as beta-Asp residues). Also has L-asparaginase activity, which is used to liberate stored nitrogen during seed development. In Lupinus arboreus (Tree lupine), this protein is Isoaspartyl peptidase/L-asparaginase.